A 277-amino-acid polypeptide reads, in one-letter code: Glutamate racemase (277 aa).

Residues 25–26 (DS) and 57–58 (YG) each bind substrate. The active-site Proton donor/acceptor is cysteine 89. Substrate is bound at residue 90–91 (NT). Cysteine 204 serves as the catalytic Proton donor/acceptor. 205 to 206 (TH) provides a ligand contact to substrate.

It belongs to the aspartate/glutamate racemases family.

It carries out the reaction L-glutamate = D-glutamate. Its pathway is cell wall biogenesis; peptidoglycan biosynthesis. Its function is as follows. Provides the (R)-glutamate required for cell wall biosynthesis. The polypeptide is Glutamate racemase (Brucella ovis (strain ATCC 25840 / 63/290 / NCTC 10512)).